The following is a 499-amino-acid chain: uncharacterized protein (499 aa).

This is an uncharacterized protein from Methanothermobacter thermautotrophicus (Methanobacterium thermoformicicum).